A 365-amino-acid chain; its full sequence is Phosphoserine aminotransferase (365 aa).

Position 46 (Arg46) interacts with L-glutamate. Residues Ala80–Thr81, Trp106, Thr157, Asp177, and Gln200 contribute to the pyridoxal 5'-phosphate site. Lys201 bears the N6-(pyridoxal phosphate)lysine mark. Asn242 to Thr243 serves as a coordination point for pyridoxal 5'-phosphate.

It belongs to the class-V pyridoxal-phosphate-dependent aminotransferase family. SerC subfamily. Homodimer. It depends on pyridoxal 5'-phosphate as a cofactor.

Its subcellular location is the cytoplasm. The enzyme catalyses O-phospho-L-serine + 2-oxoglutarate = 3-phosphooxypyruvate + L-glutamate. It catalyses the reaction 4-(phosphooxy)-L-threonine + 2-oxoglutarate = (R)-3-hydroxy-2-oxo-4-phosphooxybutanoate + L-glutamate. Its pathway is amino-acid biosynthesis; L-serine biosynthesis; L-serine from 3-phospho-D-glycerate: step 2/3. The protein operates within cofactor biosynthesis; pyridoxine 5'-phosphate biosynthesis; pyridoxine 5'-phosphate from D-erythrose 4-phosphate: step 3/5. Catalyzes the reversible conversion of 3-phosphohydroxypyruvate to phosphoserine and of 3-hydroxy-2-oxo-4-phosphonooxybutanoate to phosphohydroxythreonine. The chain is Phosphoserine aminotransferase from Leptospira biflexa serovar Patoc (strain Patoc 1 / Ames).